The primary structure comprises 361 residues: Protein Wnt-2 (361 aa).

The first 27 residues, 1–27 (MNASVLGLCLSGPLVLLLAWLAPPVTS), serve as a signal peptide directing secretion. Disulfide bonds link C77–C88, C128–C136, C138–C158, C207–C221, C209–C216, C279–C310, C295–C305, C309–C349, C325–C340, C327–C337, and C332–C333. A lipid anchor (O-palmitoleoyl serine; by PORCN) is attached at S213. An N-linked (GlcNAc...) asparagine glycan is attached at N296.

Belongs to the Wnt family. In terms of processing, palmitoleoylation is required for efficient binding to frizzled receptors. Depalmitoleoylation leads to Wnt signaling pathway inhibition.

It is found in the secreted. The protein localises to the extracellular space. The protein resides in the extracellular matrix. In terms of biological role, ligand for members of the frizzled family of seven transmembrane receptors. Probable developmental protein. May be a signaling molecule which affects the development of discrete regions of tissues. Is likely to signal over only few cell diameters. This Ornithorhynchus anatinus (Duckbill platypus) protein is Protein Wnt-2 (WNT2).